The sequence spans 321 residues: Olfactory receptor 51V1 (321 aa).

At 1-34 (MFLSSRMITSVSPSTSTNSSFLLTGFSGMEQQYP) the chain is on the extracellular side. The N-linked (GlcNAc...) asparagine glycan is linked to Asn-18. Residues 35–55 (WLSIPFSSIYAMVLLGNCMVL) traverse the membrane as a helical segment. Topologically, residues 56–63 (HVIWTEPS) are cytoplasmic. The helical transmembrane segment at 64 to 84 (LHQPMFYFLSMLALTDLCMGL) threads the bilayer. Residues 85-108 (STVYTVLGILWGIIREISLDSCIA) are Extracellular-facing. A disulfide bridge links Cys-106 with Cys-188. A helical membrane pass occupies residues 109–129 (QSYFIHGLSFMESSVLLTMAF). Topologically, residues 130 to 148 (DRYIAICNPLRYSSILTNS) are cytoplasmic. Residues 149–169 (RIIKIGLTIIGRSFFFITPPI) traverse the membrane as a helical segment. Topologically, residues 170-205 (ICLKFFNYCHFHILSHSFCLHQDLLRLACSDIRFNS) are extracellular. The chain crosses the membrane as a helical span at residues 206-226 (YYALMLVICILLLDAILILFS). Residues 227 to 246 (YILILKSVLAVASQEERHKL) are Cytoplasmic-facing. Residues 247 to 267 (FQTCISHICAVLVFYIPIISL) form a helical membrane-spanning segment. Residues 268 to 282 (TMVHRFGKHLSPVAH) lie on the Extracellular side of the membrane. A helical membrane pass occupies residues 283-303 (VLIGNIYILFPPLMNPIIYSV). At 304–321 (KTQQIHTRMLRLFSLKRY) the chain is on the cytoplasmic side.

It belongs to the G-protein coupled receptor 1 family.

It localises to the cell membrane. Odorant receptor. The chain is Olfactory receptor 51V1 (OR51V1) from Homo sapiens (Human).